The chain runs to 300 residues: Tyrosine recombinase XerC (300 aa).

Residues I2–L88 enclose the Core-binding (CB) domain. Positions R109–M294 constitute a Tyr recombinase domain. Active-site residues include R150, K174, H246, R249, and H272. Y281 functions as the O-(3'-phospho-DNA)-tyrosine intermediate in the catalytic mechanism.

This sequence belongs to the 'phage' integrase family. XerC subfamily. As to quaternary structure, forms a cyclic heterotetrameric complex composed of two molecules of XerC and two molecules of XerD.

It is found in the cytoplasm. In terms of biological role, site-specific tyrosine recombinase, which acts by catalyzing the cutting and rejoining of the recombining DNA molecules. The XerC-XerD complex is essential to convert dimers of the bacterial chromosome into monomers to permit their segregation at cell division. It also contributes to the segregational stability of plasmids. This Listeria monocytogenes serovar 1/2a (strain ATCC BAA-679 / EGD-e) protein is Tyrosine recombinase XerC.